Consider the following 72-residue polypeptide: Small ribosomal subunit protein bS18 (72 aa).

The protein belongs to the bacterial ribosomal protein bS18 family. Part of the 30S ribosomal subunit. Forms a tight heterodimer with protein bS6.

Functionally, binds as a heterodimer with protein bS6 to the central domain of the 16S rRNA, where it helps stabilize the platform of the 30S subunit. This chain is Small ribosomal subunit protein bS18, found in Trichodesmium erythraeum (strain IMS101).